The primary structure comprises 1486 residues: Alsin homolog (1486 aa).

RCC1 repeat units follow at residues 147-201, 256-307, and 308-363; these read QGVV…MLVA, HTQL…ARTL, and DGRL…LLNA. MORN repeat units lie at residues 744–765, 766–784, 789–804, 817–832, 839–853, and 863–884; these read CGTWRKGVLHGNCYLEYPDGSV, YCGELQHGIIEGFGKMVIP, YVGNFKGGRFHGHGVY, YEGNFCEGLFHGHGVM, YVGEYQANARSGYGV, and YMGMFADNKRSGIGSCITNRGD. In terms of domain architecture, VPS9 spans 1333–1486; sequence SRKDEMYRQN…VTSRALQKIP (154 aa).

In the embryo, expressed in a wide range of tissues including the epidermis and the ventral nerve cord.

In terms of biological role, has guanine nucleotide exchange factor (GEF) activity towards Rab5. Promotes the exchange of GDP to GTP, converting inactive GDP-bound Rab5 into its active GTP-bound form. This chain is Alsin homolog, found in Drosophila melanogaster (Fruit fly).